A 206-amino-acid polypeptide reads, in one-letter code: Pyrrolidone-carboxylate peptidase 2 (206 aa).

Catalysis depends on residues E78, C141, and H165.

This sequence belongs to the peptidase C15 family. In terms of assembly, homotetramer.

Its subcellular location is the cytoplasm. It catalyses the reaction Release of an N-terminal pyroglutamyl group from a polypeptide, the second amino acid generally not being Pro.. Removes 5-oxoproline from various penultimate amino acid residues except L-proline. The protein is Pyrrolidone-carboxylate peptidase 2 of Caldanaerobacter subterraneus subsp. tengcongensis (strain DSM 15242 / JCM 11007 / NBRC 100824 / MB4) (Thermoanaerobacter tengcongensis).